Here is a 368-residue protein sequence, read N- to C-terminus: Glutamate 5-kinase (368 aa).

Lysine 9 contributes to the ATP binding site. 3 residues coordinate substrate: serine 49, aspartate 136, and asparagine 148. Residues 168-169 (TD) and 210-216 (TGGMMTK) contribute to the ATP site. One can recognise a PUA domain in the interval 275–353 (AGIITIDNGA…ADIENVLGYE (79 aa)).

The protein belongs to the glutamate 5-kinase family.

The protein localises to the cytoplasm. The catalysed reaction is L-glutamate + ATP = L-glutamyl 5-phosphate + ADP. Its pathway is amino-acid biosynthesis; L-proline biosynthesis; L-glutamate 5-semialdehyde from L-glutamate: step 1/2. In terms of biological role, catalyzes the transfer of a phosphate group to glutamate to form L-glutamate 5-phosphate. In Haemophilus influenzae (strain PittEE), this protein is Glutamate 5-kinase.